The following is a 104-amino-acid chain: Membrane magnesium transporter (104 aa).

Residues 1–2 (MN) are Cytoplasmic-facing. Residues 3–23 (LGFLVGVFGVLILSHAAYSTI) traverse the membrane as a helical segment. The Lumenal portion of the chain corresponds to 24–40 (QYRGLLKIMEEEFSRPP). Residues 41–61 (INVILELIIGLALCMWAALTF) form a helical membrane-spanning segment. Over 62 to 104 (PGKFLSIHPDSDENRAVFLPDNSDFMIFNHRGRLFPPQIDMKF) the chain is Cytoplasmic.

This sequence belongs to the membrane magnesium transporter (TC 1.A.67) family. In terms of assembly, component of the ER membrane protein complex (EMC).

The protein localises to the endoplasmic reticulum membrane. It is found in the golgi apparatus membrane. The protein resides in the early endosome membrane. Mediates Mg(2+) transport. The polypeptide is Membrane magnesium transporter (Arabidopsis thaliana (Mouse-ear cress)).